Reading from the N-terminus, the 320-residue chain is o-succinylbenzoate synthase (320 aa).

Lys-133 functions as the Proton donor in the catalytic mechanism. Residues Asp-161, Glu-190, and Asp-213 each contribute to the Mg(2+) site. Residue Lys-235 is the Proton acceptor of the active site.

The protein belongs to the mandelate racemase/muconate lactonizing enzyme family. MenC type 1 subfamily. A divalent metal cation serves as cofactor.

The catalysed reaction is (1R,6R)-6-hydroxy-2-succinyl-cyclohexa-2,4-diene-1-carboxylate = 2-succinylbenzoate + H2O. The protein operates within quinol/quinone metabolism; 1,4-dihydroxy-2-naphthoate biosynthesis; 1,4-dihydroxy-2-naphthoate from chorismate: step 4/7. It functions in the pathway quinol/quinone metabolism; menaquinone biosynthesis. Functionally, converts 2-succinyl-6-hydroxy-2,4-cyclohexadiene-1-carboxylate (SHCHC) to 2-succinylbenzoate (OSB). The sequence is that of o-succinylbenzoate synthase from Shigella sonnei (strain Ss046).